The sequence spans 259 residues: uncharacterized protein (259 aa).

6 consecutive transmembrane segments (helical) span residues 9-31, 84-106, 126-148, 153-175, 196-215, and 230-252; these read ILSV…LESL, LLGG…LQWF, FLIY…FVFG, SIVA…LEYV, HFIL…YIAA, and TFRA…SWLG.

The protein localises to the cell membrane. This is an uncharacterized protein from Archaeoglobus fulgidus (strain ATCC 49558 / DSM 4304 / JCM 9628 / NBRC 100126 / VC-16).